A 347-amino-acid chain; its full sequence is Suppressor of RNA-mediated gene silencing (347 aa).

This sequence belongs to the phytoreovirus non-structural protein 10 family.

In terms of biological role, suppressor of RNA-mediated gene silencing, also known as post-transcriptional gene silencing (PTGS), a mechanism of plant viral defense that limits the accumulation of viral RNAs. The chain is Suppressor of RNA-mediated gene silencing from Catharanthus roseus (Madagascar periwinkle).